The following is a 261-amino-acid chain: MYYAVSQARVNAAPATMLRPQRPGDVQLGASLYELVGYRQPPISSSSSTSSSSTASLLPKPAREKPEAPLAEPRGPAPESGGARADAKEEQQQQQLRRKINSRERKRMQDLNLAMDALREVILPYSAAHCQGAPGRKLSKIATLLLARNYILLLGSSLQELRRALGDGAGPAAPRLLLAGLPLLAAAPGSVLLAPGAVGPPETLRPTKYLSLALDEPPCGQFALPAGGAGSPGLCSCAVCKFPHLVPAGLGLAAVQAQFSK.

The segment at 41–105 (PPISSSSSTS…LRRKINSRER (65 aa)) is disordered. Residues 44-56 (SSSSSTSSSSTAS) are compositionally biased toward low complexity. The region spanning 95–154 (QLRRKINSRERKRMQDLNLAMDALREVILPYSAAHCQGAPGRKLSKIATLLLARNYILLL) is the bHLH domain.

Expressed specifically in the brain, including the corpus callosum, hippocampal and cerebral white matter. Also detected in cells scattered in gray matter, most probably in oligodendrocytes.

Its subcellular location is the nucleus. Promotes formation and maturation of oligodendrocytes, especially within the brain. Cooperates with OLIG2 to establish the pMN domain of the embryonic neural tube. The sequence is that of Oligodendrocyte transcription factor 1 (Olig1) from Rattus norvegicus (Rat).